We begin with the raw amino-acid sequence, 108 residues long: Class I hydrophobin 3 (108 aa).

The first 17 residues, methionine 1 to alanine 17, serve as a signal peptide directing secretion. 4 disulfides stabilise this stretch: cysteine 26–cysteine 87, cysteine 33–cysteine 81, cysteine 34–cysteine 67, and cysteine 88–cysteine 101.

It belongs to the fungal hydrophobin family. In terms of assembly, self-assembles to form functional amyloid fibrils called rodlets. Self-assembly into fibrillar rodlets occurs spontaneously at hydrophobic:hydrophilic interfaces and the rodlets further associate laterally to form amphipathic monolayers.

The protein resides in the secreted. The protein localises to the cell wall. Its function is as follows. Aerial growth, conidiation, and dispersal of filamentous fungi in the environment rely upon a capability of their secreting small amphipathic proteins called hydrophobins (HPBs) with low sequence identity. Class I can self-assemble into an outermost layer of rodlet bundles on aerial cell surfaces, conferring cellular hydrophobicity that supports fungal growth, development and dispersal; whereas Class II form highly ordered films at water-air interfaces through intermolecular interactions but contribute nothing to the rodlet structure. The sequence is that of Class I hydrophobin 3 from Pisolithus tinctorius (Dead man's foot).